The sequence spans 344 residues: MKKNKVPTELIFSLPNDLLVNILARVSRLDYPILSLVSKRFSSVLTLPELYQTRSLVGLTENCLYVCLLSSRADRIPSWFKLCRRPILASDTRKSSGYVLATIPIPHSPPLHRSSLVAVGSNIYNIGGSISQSQSSSVSILDCWSHTWLEGPSMQVEREYPSASLLDGKIYVTGGCRLTFHGCGDQTDNVVVDGKLHSCGGYKGVAYNPNDGRWDSLGSEMNLGLKWSSSCVIENVIYYYYHNENIKWYDTKVRSWRTLNGLKTLPRFARYANVRLADYGGKMALFWDKFTGCGNQNRMIWCAIIALERRNNEEIWGNVEWSDAVLPHQVPMAYVCEYVVAVNV.

The F-box domain maps to 8-54 (TELIFSLPNDLLVNILARVSRLDYPILSLVSKRFSSVLTLPELYQTR). Kelch repeat units follow at residues 122–168 (NIYN…LLDG), 170–195 (IYVT…VDGK), 196–241 (LHSC…YYYY), and 243–276 (NENI…NVRL).

The polypeptide is Putative F-box/kelch-repeat protein At1g19930 (Arabidopsis thaliana (Mouse-ear cress)).